Consider the following 315-residue polypeptide: MLSPNHTIVTEFILLGLTDDPVLEKILFGVFLAIYLITLAGNLCMILLIRTNSQLQTPMYFFLGHLSFVDICYSSNVTPNMLHNFLSEQKTISYAGCFTQCLLFIALVITEFYFLASMALDRYVAICSPLHYSSRMSKNICISLVTVPYMYGFLNGLSQTLLTFHLSFCGSLEINHFYCADPPLIMLACSDTRVKKMAMFVVAGFTLSSSLFIILLSYLFIFAAIFRIRSAEGRHKAFSTCASHLTIVTLFYGTLFCMYVRPPSEKSVEESKIIAVFYTFLSPMLNPLIYSLRNRDVILAIQQMIRGKSFCKIAV.

Topologically, residues 1-25 are extracellular; sequence MLSPNHTIVTEFILLGLTDDPVLEK. Asn5 is a glycosylation site (N-linked (GlcNAc...) asparagine). Residues 26–46 form a helical membrane-spanning segment; it reads ILFGVFLAIYLITLAGNLCMI. The Cytoplasmic portion of the chain corresponds to 47 to 54; the sequence is LLIRTNSQ. A helical membrane pass occupies residues 55–75; that stretch reads LQTPMYFFLGHLSFVDICYSS. The Extracellular segment spans residues 76-99; that stretch reads NVTPNMLHNFLSEQKTISYAGCFT. A disulfide bond links Cys97 and Cys189. A helical membrane pass occupies residues 100-120; sequence QCLLFIALVITEFYFLASMAL. Over 121 to 139 the chain is Cytoplasmic; it reads DRYVAICSPLHYSSRMSKN. The helical transmembrane segment at 140-160 threads the bilayer; sequence ICISLVTVPYMYGFLNGLSQT. Over 161-196 the chain is Extracellular; it reads LLTFHLSFCGSLEINHFYCADPPLIMLACSDTRVKK. The helical transmembrane segment at 197 to 217 threads the bilayer; that stretch reads MAMFVVAGFTLSSSLFIILLS. The Cytoplasmic segment spans residues 218–237; sequence YLFIFAAIFRIRSAEGRHKA. A helical transmembrane segment spans residues 238–258; the sequence is FSTCASHLTIVTLFYGTLFCM. Over 259–271 the chain is Extracellular; sequence YVRPPSEKSVEES. Residues 272–292 form a helical membrane-spanning segment; the sequence is KIIAVFYTFLSPMLNPLIYSL. The Cytoplasmic segment spans residues 293–315; it reads RNRDVILAIQQMIRGKSFCKIAV.

The protein belongs to the G-protein coupled receptor 1 family.

Its subcellular location is the cell membrane. Functionally, odorant receptor. This chain is Olfactory receptor 5M10 (OR5M10), found in Homo sapiens (Human).